The primary structure comprises 88 residues: Probable Fe(2+)-trafficking protein (88 aa).

The protein belongs to the Fe(2+)-trafficking protein family.

Functionally, could be a mediator in iron transactions between iron acquisition and iron-requiring processes, such as synthesis and/or repair of Fe-S clusters in biosynthetic enzymes. This chain is Probable Fe(2+)-trafficking protein, found in Teredinibacter turnerae (strain ATCC 39867 / T7901).